The chain runs to 406 residues: DNA repair protein RAD55 (406 aa).

43–50 is an ATP binding site; it reads GPPGIGKT. The interval 385-406 is disordered; the sequence is DSNDNPLPNAEGKEEIIYDSEG.

It belongs to the RecA family. RAD55 subfamily.

Its subcellular location is the nucleus. Its function is as follows. Required for radiation resistance and meiotic viability and presumably acts in recombination and recombinational DNA repair pathways. The chain is DNA repair protein RAD55 (RAD55) from Saccharomyces cerevisiae (strain ATCC 204508 / S288c) (Baker's yeast).